The following is a 772-amino-acid chain: MAEEHFDVLTKSGEKTGVSKPRGEVHRDGDYHRAVHVWIFVETTQQLLLQLRSDDKDSWPGQWDISSAGHISAGDTSLLSAQRELEEELGVKLPKDAFEKIFVFLQECVTNDGKFINNEFNDVYLVTILHPIPLEAFTLQKEEVSAVKYVPYEEYRNFLSKEDPAYVPYDVNGEYGKLFDIIRQRCQVNTEARSLSLQKQLQRYSPVTLEAKLTELSEADQKALGLIVKAAKIMDDIFYEQVWNSNPALRDWLKDHANASKLDKLKWDYFTINKSPWSSLDENEAFLSTADSAVKLLPGATKAIAGWKGLEYRAAFPVTKPPGANFYPPDMDKMEFTLWLNGLTEEQKHAATGFFSVIKRRSEANLDASDHLASSTKKLPDSNSDLYSIPYSEIYRPFLKKASEFLQKAGDLVSSPSLKKLLHSKAEAFLSNEYYESDIAWMDLDSKLDITIGPYETYEDEIFGYKATFETFIGIRDDKATADLKLFGDNLKLLEDNLPLESVYKSTDVSAAPIRVIQLIYNSGDVKGPQTVAYNLPNDEKIVKDRGTSMVMLKNVQEAKFEHILKPIAEITISKEQRGLVDFDSFFTHTICHECCHGIGPHTITLPGGQTSTVRKELQEVHSAMEEAKADIVGLWALKFLITKGLLSKSMVESMYVSFLAGCFRSIRFGLTEAHGKGQALQFNYLYEKGAFVFHEDSTFSVDFAKIEGAVESLSHEILTIQGKGDKNAATLLLNKYCTITGPLKTALENLERVKVPVDISPTFPLAEALMN.

Residues 1 to 14 show a composition bias toward basic and acidic residues; sequence MAEEHFDVLTKSGE. The disordered stretch occupies residues 1–25; that stretch reads MAEEHFDVLTKSGEKTGVSKPRGEV. The region spanning 30–172 is the Nudix hydrolase domain; the sequence is DYHRAVHVWI…DPAYVPYDVN (143 aa). Residues 69-90 carry the Nudix box motif; the sequence is GHISAGDTSLLSAQRELEEELG. Residues Glu84 and Glu88 each contribute to the Mg(2+) site.

It belongs to the Nudix hydrolase family. It depends on Mg(2+) as a cofactor. The cofactor is Mn(2+). In terms of tissue distribution, expressed in roots, stems and, at lower level, leaves.

Its function is as follows. Probably mediates the hydrolysis of some nucleoside diphosphate derivatives. This is Nudix hydrolase 3 (NUDT3) from Arabidopsis thaliana (Mouse-ear cress).